A 150-amino-acid chain; its full sequence is NADH-quinone oxidoreductase subunit A (150 aa).

A run of 3 helical transmembrane segments spans residues 14–34, 66–86, and 96–116; these read FAVFLIGAIGLCGLMLLGAFF, FYLVAMFFVIFDVEALYLYAW, and IGFIEATIFILVLLAGLVYLV.

It belongs to the complex I subunit 3 family. As to quaternary structure, NDH-1 is composed of 13 different subunits. Subunits NuoA, H, J, K, L, M, N constitute the membrane sector of the complex.

The protein resides in the cell inner membrane. It carries out the reaction a quinone + NADH + 5 H(+)(in) = a quinol + NAD(+) + 4 H(+)(out). In terms of biological role, NDH-1 shuttles electrons from NADH, via FMN and iron-sulfur (Fe-S) centers, to quinones in the respiratory chain. The immediate electron acceptor for the enzyme in this species is believed to be ubiquinone. Couples the redox reaction to proton translocation (for every two electrons transferred, four hydrogen ions are translocated across the cytoplasmic membrane), and thus conserves the redox energy in a proton gradient. This Yersinia enterocolitica serotype O:8 / biotype 1B (strain NCTC 13174 / 8081) protein is NADH-quinone oxidoreductase subunit A.